A 313-amino-acid polypeptide reads, in one-letter code: Ribosomal RNA small subunit methyltransferase H (313 aa).

S-adenosyl-L-methionine contacts are provided by residues 35-37 (GGH), Asp55, Phe81, Asp103, and Gln110.

It belongs to the methyltransferase superfamily. RsmH family.

The protein resides in the cytoplasm. The catalysed reaction is cytidine(1402) in 16S rRNA + S-adenosyl-L-methionine = N(4)-methylcytidine(1402) in 16S rRNA + S-adenosyl-L-homocysteine + H(+). In terms of biological role, specifically methylates the N4 position of cytidine in position 1402 (C1402) of 16S rRNA. The protein is Ribosomal RNA small subunit methyltransferase H of Pseudomonas syringae pv. tomato (strain ATCC BAA-871 / DC3000).